A 493-amino-acid chain; its full sequence is Guanosine-5'-triphosphate,3'-diphosphate pyrophosphatase (493 aa).

This sequence belongs to the GppA/Ppx family. GppA subfamily.

It catalyses the reaction guanosine 3'-diphosphate 5'-triphosphate + H2O = guanosine 3',5'-bis(diphosphate) + phosphate + H(+). Its pathway is purine metabolism; ppGpp biosynthesis; ppGpp from GTP: step 2/2. Catalyzes the conversion of pppGpp to ppGpp. Guanosine pentaphosphate (pppGpp) is a cytoplasmic signaling molecule which together with ppGpp controls the 'stringent response', an adaptive process that allows bacteria to respond to amino acid starvation, resulting in the coordinated regulation of numerous cellular activities. The polypeptide is Guanosine-5'-triphosphate,3'-diphosphate pyrophosphatase (Salmonella paratyphi A (strain ATCC 9150 / SARB42)).